The chain runs to 721 residues: MTPIQKTATVGGKDILLETGKVAKQAHGSVWVRLGDSIVLVTAVSAAEKKEGIDFFPLTVDYQEKLFAAGRVPGSFFRREGRPTEKETLTSRLVDRSCRPLFAEGYSNETQVIATVISFDQENDTDVLALTGASAALHISDIPFGGPIAGVRVARVGGQLVANPTLAQRAEADLDVVMAASRDAIVMVEGGAQEVSEAVMIEALLFGQAAVQPLLDAQDALRAATGNKARRAFEPPKNDVELRAKVKALTWEKVKEAYGRNEKHDRYGRLSEIKKELLQALKDEAAGDAAKLATIALREKEIKGYYEDVKYDYMRKMITDERRRIGGRGMADIRKITCEVGLLPRVHGSSLFTRGETQALVATTLGTAEDEQRVEMLTGMVFKKFMLHYNFPPFSVGEVKFLRSPGRREIGHGALAERALRAVMPPEDQFPYTVRVVSDIMESNGSSSMASVCGGCLSLMDAGVPIKAPVAGIAMGLIKEGEKIAILSDILGDEDHLGDMDFKVCGTAAGITSIQMDIKIGGVTRDILEQALAQAAEGRKHILGEMAKALSAPRGSISAYAPRITTIKIRPERIKDIIGPGGKTIKDITARTGTSINIEDDGSVSIASPNQDKVEEAIKMIRGLTQEAEVGRIYLGTVRKIAEFGAFVEIFPGTDGLIHISELSDKRVKSVSDVLSEGEEVMVKVISVDRSGKIRLSRKEALADSAKKSEGTEPPKGEPAK.

Residues aspartate 495 and aspartate 501 each coordinate Mg(2+). The 60-residue stretch at 562 to 621 folds into the KH domain; it reads PRITTIKIRPERIKDIIGPGGKTIKDITARTGTSINIEDDGSVSIASPNQDKVEEAIKMI. The 69-residue stretch at 631–699 folds into the S1 motif domain; it reads GRIYLGTVRK…RSGKIRLSRK (69 aa). The interval 699–721 is disordered; it reads KEALADSAKKSEGTEPPKGEPAK.

This sequence belongs to the polyribonucleotide nucleotidyltransferase family. Requires Mg(2+) as cofactor.

The protein localises to the cytoplasm. The enzyme catalyses RNA(n+1) + phosphate = RNA(n) + a ribonucleoside 5'-diphosphate. In terms of biological role, involved in mRNA degradation. Catalyzes the phosphorolysis of single-stranded polyribonucleotides processively in the 3'- to 5'-direction. This chain is Polyribonucleotide nucleotidyltransferase, found in Anaeromyxobacter dehalogenans (strain 2CP-1 / ATCC BAA-258).